The following is a 216-amino-acid chain: MEVLTKEALLVKNALLNKGIETPFKKIYEKNKPDIHKISKYIKKIMDLLNLDLNNDSLSKTPNRIAYMYIEEIFSGLNYNNFPKITLIKNTSKINDLITVNNIVLNSTCEHHFLIFEGKAIVSYIPDKILIGLSKINRIVDFFSKRPQIQERLTNQILVAIQILLDTKNVAVAIKAKHLCVKARGIKDSHSKTLTLSLGGVFKSKQNIKKEFLKDF.

Positions 109, 112, and 180 each coordinate Zn(2+).

This sequence belongs to the GTP cyclohydrolase I family. Toroid-shaped homodecamer, composed of two pentamers of five dimers.

It carries out the reaction GTP + H2O = 7,8-dihydroneopterin 3'-triphosphate + formate + H(+). The protein operates within cofactor biosynthesis; 7,8-dihydroneopterin triphosphate biosynthesis; 7,8-dihydroneopterin triphosphate from GTP: step 1/1. The protein is GTP cyclohydrolase 1 of Wigglesworthia glossinidia brevipalpis.